An 816-amino-acid chain; its full sequence is Nicotine 6-hydroxylase large subunit (816 aa).

Glu-745 provides a ligand contact to Mo-molybdopterin cytosine dinucleotide.

It belongs to the xanthine dehydrogenase family. As to quaternary structure, heterotrimer composed of a large subunit (NdhL), a medium subunit (NdhM) and a small subunit (NdhS). Requires Mo-molybdopterin cytosine dinucleotide as cofactor.

It is found in the cytoplasm. It catalyses the reaction (R)-nicotine + A + H2O = (R)-6-hydroxynicotine + AH2. It carries out the reaction (S)-nicotine + A + H2O = (S)-6-hydroxynicotine + AH2. The protein operates within alkaloid degradation; nicotine degradation; 6-hydroxypseudooxynicotine from nicotine (R-isomer route): step 1/2. Its pathway is alkaloid degradation; nicotine degradation; 6-hydroxypseudooxynicotine from nicotine (S-isomer route): step 1/2. Nicotine dehydrogenase activity is inhibited by tungsten. In terms of biological role, component of the nicotine 6-hydroxylase, which is involved in the degradation of nicotine. Catalyzes the hydroxylation of the pyridine ring at C6 to form 6-hydroxynicotine. Can use both L-nicotine and D-nicotine. The chain is Nicotine 6-hydroxylase large subunit from Paenarthrobacter nicotinovorans (Arthrobacter nicotinovorans).